A 196-amino-acid polypeptide reads, in one-letter code: Protein GrpE (196 aa).

Positions 1-39 (MSSKEQKTPEGQAPEEIIMDQHEEIEAVEPEASAEQVDP) are disordered.

It belongs to the GrpE family. As to quaternary structure, homodimer.

Its subcellular location is the cytoplasm. Functionally, participates actively in the response to hyperosmotic and heat shock by preventing the aggregation of stress-denatured proteins, in association with DnaK and GrpE. It is the nucleotide exchange factor for DnaK and may function as a thermosensor. Unfolded proteins bind initially to DnaJ; upon interaction with the DnaJ-bound protein, DnaK hydrolyzes its bound ATP, resulting in the formation of a stable complex. GrpE releases ADP from DnaK; ATP binding to DnaK triggers the release of the substrate protein, thus completing the reaction cycle. Several rounds of ATP-dependent interactions between DnaJ, DnaK and GrpE are required for fully efficient folding. In Escherichia coli (strain SMS-3-5 / SECEC), this protein is Protein GrpE.